We begin with the raw amino-acid sequence, 96 residues long: UPF0235 protein YggU (96 aa).

This sequence belongs to the UPF0235 family.

The chain is UPF0235 protein YggU from Escherichia coli O127:H6 (strain E2348/69 / EPEC).